Consider the following 228-residue polypeptide: Protein slowmo homolog (228 aa).

Positions 1–172 (MPLFETIKHT…TIIKVQKEAE (172 aa)) constitute a PRELI/MSF1 domain.

Belongs to the slowmo family.

This is Protein slowmo homolog (slmo) from Dictyostelium discoideum (Social amoeba).